A 319-amino-acid chain; its full sequence is Ribosomal large subunit pseudouridine synthase C (319 aa).

An S4 RNA-binding domain is found at Gln-20–Pro-83. Asp-144 is an active-site residue.

It belongs to the pseudouridine synthase RluA family.

The catalysed reaction is uridine(955/2504/2580) in 23S rRNA = pseudouridine(955/2504/2580) in 23S rRNA. In terms of biological role, responsible for synthesis of pseudouridine from uracil at positions 955, 2504 and 2580 in 23S ribosomal RNA. The polypeptide is Ribosomal large subunit pseudouridine synthase C (Escherichia coli (strain K12)).